Reading from the N-terminus, the 323-residue chain is Replication factor C subunit 4 (323 aa).

ATP-binding positions include Val12, Val24, 49–57, Asn145, and Arg203; that span reads GMPGIGKTT.

This sequence belongs to the activator 1 small subunits family. As to quaternary structure, replication factor C (RFC) is a heteropentamer of subunits RFC1, RFC2, RFC3, RFC4 and RFC5 and forms a complex with POL30/PCNA in the presence of ATP. Component of the RAD24-RFC complex which consists of RAD14, RFC2, RFC3, RFC4 and RFC5 and associates with the checkpoint clamp DDC1:MEC3:RAD17 complex. Component of the ELG1-RFC complex which consists of ELG1, RFC2, RFC3, RFC4 and RFC5. Component of the CTF18-RFC complex, which consists of CTF18, CTF8, DCC1, RFC2, RFC3, RFC4 and RFC5. RFC4 interacts with ECO1.

The protein localises to the nucleus. Functionally, component of ATP-dependent clamp loader (RFC and RFC-like) complexes for DNA clamps, such as the POL30/PCNA homotrimer and the checkpoint clamp DDC1:MEC3:RAD17 complex. During a clamp loading circle, the RFC:clamp complex binds to DNA and the recognition of the double-stranded/single-stranded junction stimulates ATP hydrolysis by RFC. The complex presumably provides bipartite ATP sites in which one subunit supplies a catalytic site for hydrolysis of ATP bound to the neighboring subunit. Dissociation of RFC from the clamp leaves the clamp encircling DNA. Component of the replication factor C (RFC or activator 1) complex which loads POL30/PCNA and acts during elongation of primed DNA templates by DNA polymerase delta and epsilon. RFC has an essential but redundant activity in sister chromatid cohesion establishment. Component of the RFC-like complex CTF18-RFC which is required for efficient establishment of chromosome cohesion during S-phase and may load or unload POL30/PCNA. Component of the RFC-like RAD24-RFC complex which loads the checkpoint clamp DDC1:MEC3:RAD17 complex and is involved in DNA repair pathways. Component of the RFC-like ELG1-RFC complex which appears to have a role in DNA replication, replication fork re-start, recombination and repair. The polypeptide is Replication factor C subunit 4 (RFC4) (Saccharomyces cerevisiae (strain ATCC 204508 / S288c) (Baker's yeast)).